The primary structure comprises 102 residues: Secreted RxLR effector protein 61 (102 aa).

Residues 1 to 22 form the signal peptide; it reads MAFQLRIVQHLLHITFLRLPLA. Positions 51-60 match the RxLR-dEER motif; that stretch reads RRLRQLNEHR.

The protein belongs to the RxLR effector family.

It is found in the secreted. The protein resides in the host chloroplast envelope. The protein localises to the host cytoplasm. It localises to the host nucleus. Effector that partially suppresses the tobacco programmed cell death induced by cell death-inducing proteins. This Plasmopara viticola (Downy mildew of grapevine) protein is Secreted RxLR effector protein 61.